Consider the following 374-residue polypeptide: L-serine/homoserine O-acetyltransferase (374 aa).

One can recognise an AB hydrolase-1 domain in the interval 46–357 (AVLVLTGLSP…TPAGHDAFLV (312 aa)). The active-site Nucleophile is the serine 149. Catalysis depends on residues aspartate 319 and histidine 352.

The protein belongs to the AB hydrolase superfamily. MetX family. In terms of assembly, homodimer.

The protein resides in the cytoplasm. It catalyses the reaction L-serine + acetyl-CoA = O-acetyl-L-serine + CoA. It carries out the reaction L-homoserine + acetyl-CoA = O-acetyl-L-homoserine + CoA. Its pathway is antibiotic biosynthesis. Functionally, involved in the biosynthesis of the antibiotic D-cycloserine (DCS), a cyclic structural analog of D-alanine, used as an antitubercular agent. Catalyzes the transfer of the acetyl group from acetyl-CoA to the hydroxyl group of L-serine to yield the activated serine, O-acetyl-L-serine. It prefers L-serine over L-homoserine. The polypeptide is L-serine/homoserine O-acetyltransferase (Streptomyces lavendulae).